Here is a 145-residue protein sequence, read N- to C-terminus: Probable inactive ribonuclease-like protein 12 (145 aa).

Residues Met1–Thr19 form the signal peptide. N-linked (GlcNAc...) asparagine glycosylation occurs at Asn88.

The protein belongs to the pancreatic ribonuclease family.

It localises to the secreted. Does not exhibit any ribonuclease activity. The sequence is that of Probable inactive ribonuclease-like protein 12 (Rnase12) from Rattus norvegicus (Rat).